A 256-amino-acid polypeptide reads, in one-letter code: Calsenilin (256 aa).

The disordered stretch occupies residues 1–20; that stretch reads MQPAKEVTKASDGSLLGDLG. Residue S14 is modified to Phosphoserine. A Glycyl lysine isopeptide (Lys-Gly) (interchain with G-Cter in SUMO1) cross-link involves residue K26. Residues C45 and C46 are each lipidated (S-palmitoyl cysteine). S60 carries the post-translational modification Phosphoserine. Position 63 is a phosphoserine; by CK1 (S63). Positions 67-123 constitute an EF-hand 1; degenerate domain; it reads LELSTVRHQPEGLDQLQAQTKFTKKELQSLYRGFKNECPTGLVDEDTFKLIYAQFFP. K90 participates in a covalent cross-link: Glycyl lysine isopeptide (Lys-Gly) (interchain with G-Cter in SUMO1). 3 consecutive EF-hand domains span residues 126-161, 162-197, and 210-245; these read DATTYAHFLFNAFDADGNGAIHFEDFVVGLSILLRG, TVHEKLKWAFNLYDINKDGYITKEEMLAIMKSIYDM, and APAEHVERFFEKMDRNQDGVVTIEEFLEACQKDENI. Ca(2+)-binding residues include D175, N177, D179, Y181, E186, D223, N225, D227, and E234. Positions 243–256 are interaction with KCND2; it reads ENIMSSMQLFENVI.

The protein belongs to the recoverin family. As to quaternary structure, binds to DNA as a homomultimer. Dimerization is induced by binding to calcium. Interacts with the C-terminus of PSEN1 and PSEN2 and with PSEN2 CTF subunit. Associates with KCN1. Component of heteromultimeric potassium channels. Identified in potassium channel complexes containing KCND1, KCND2, KCND3, KCNIP1, KCNIP2, KCNIP3, KCNIP4, DPP6 and DPP10. Interacts with KCND2 and KCND3. Post-translationally, palmitoylated. Palmitoylation enhances association with the plasma membrane. In terms of processing, proteolytically cleaved by caspase-3. Phosphorylation at Ser-63 inhibits cleavage by CASP3. As to expression, highly expressed in brain. Widely expressed at lower levels. Expression levels are elevated in brain cortex regions affected by Alzheimer disease.

The protein localises to the cytoplasm. It is found in the cell membrane. The protein resides in the endoplasmic reticulum. Its subcellular location is the golgi apparatus. It localises to the nucleus. Calcium-dependent transcriptional repressor that binds to the DRE element of genes including PDYN and FOS. Affinity for DNA is reduced upon binding to calcium and enhanced by binding to magnesium. Seems to be involved in nociception. In terms of biological role, regulatory subunit of Kv4/D (Shal)-type voltage-gated rapidly inactivating A-type potassium channels, such as KCND2/Kv4.2 and KCND3/Kv4.3. Modulates channel expression at the cell membrane, gating characteristics, inactivation kinetics and rate of recovery from inactivation in a calcium-dependent and isoform-specific manner. Its function is as follows. May play a role in the regulation of PSEN2 proteolytic processing and apoptosis. Together with PSEN2 involved in modulation of amyloid-beta formation. In Homo sapiens (Human), this protein is Calsenilin (KCNIP3).